Reading from the N-terminus, the 211-residue chain is uncharacterized protein (211 aa).

Residues Ile105–Arg143 are a coiled coil. The chain crosses the membrane as a helical span at residues Gln191–Phe211.

This sequence belongs to the CCDC90 family.

Its subcellular location is the mitochondrion. The protein localises to the membrane. This is an uncharacterized protein from Schizosaccharomyces pombe (strain 972 / ATCC 24843) (Fission yeast).